Consider the following 376-residue polypeptide: 1-acyl-sn-glycerol-3-phosphate acyltransferase gamma (376 aa).

At 1 to 124 (MGLLAFLKTQ…LGSSKVLAKK (124 aa)) the chain is on the cytoplasmic side. The HXXXXD motif signature appears at 96 to 101 (HNFEID). Residues 125–145 (ELLYVPLIGWTWYFLEIVFCK) form a helical membrane-spanning segment. Residues 146–316 (RKWEEDRDTV…TLLNFLSWAT (171 aa)) lie on the Lumenal side of the membrane. A helical transmembrane segment spans residues 317–339 (ILLSPLFSFVLGVFASGSPLLIL). Topologically, residues 340–376 (TFLGFVGAASFGVRRLIGVTEIEKGSSYGNQEFKKKE) are cytoplasmic.

The protein belongs to the 1-acyl-sn-glycerol-3-phosphate acyltransferase family.

Its subcellular location is the endoplasmic reticulum membrane. It localises to the nucleus envelope. It catalyses the reaction a 1-acyl-sn-glycero-3-phosphate + an acyl-CoA = a 1,2-diacyl-sn-glycero-3-phosphate + CoA. The catalysed reaction is pentadecanoyl-CoA + 1-(9Z-octadecenoyl)-sn-glycero-3-phosphate = 1-(9Z)-octadecenoyl-2-pentadecanoyl-sn-glycero-3-phosphate + CoA. It carries out the reaction heptadecanoyl-CoA + 1-(9Z-octadecenoyl)-sn-glycero-3-phosphate = 1-(9Z)-octadecenoyl-2-heptadecanoyl-sn-glycero-3-phosphate + CoA. The enzyme catalyses 1-(9Z-octadecenoyl)-sn-glycero-3-phosphate + octadecanoyl-CoA = 1-(9Z-octadecenoyl)-2-octadecanoyl-sn-glycero-3-phosphate + CoA. It catalyses the reaction nonadecanoyl-CoA + 1-(9Z-octadecenoyl)-sn-glycero-3-phosphate = 1-(9Z)-octadecenoyl-2-nonadecanoyl-sn-glycero-3-phosphate + CoA. The catalysed reaction is 1-(9Z-octadecenoyl)-sn-glycero-3-phosphate + (5Z,8Z,11Z,14Z)-eicosatetraenoyl-CoA = 1-(9Z)-octadecenoyl-2-(5Z,8Z,11Z,14Z)-eicosatetraenoyl-sn-glycero-3-phosphate + CoA. It carries out the reaction 1-(9Z-octadecenoyl)-sn-glycero-3-phosphate + (9Z)-octadecenoyl-CoA = 1,2-di-(9Z-octadecenoyl)-sn-glycero-3-phosphate + CoA. The enzyme catalyses 1-(9Z-octadecenoyl)-sn-glycero-3-phosphate + (9Z,12Z)-octadecadienoyl-CoA = 1-(9Z)-octadecenoyl-2-(9Z,12Z)-octadecadienoyl-sn-glycero-3-phosphate + CoA. It catalyses the reaction 1-(9Z-octadecenoyl)-sn-glycero-3-phosphocholine + (5Z,8Z,11Z,14Z)-eicosatetraenoyl-CoA = 1-(9Z)-octadecenoyl-2-(5Z,8Z,11Z,14Z)-icosatetraenoyl-sn-glycero-3-phosphocholine + CoA. The catalysed reaction is 1-(9Z-octadecenoyl)-sn-glycero-3-phospho-(1D-myo-inositol) + (5Z,8Z,11Z,14Z)-eicosatetraenoyl-CoA = 1-(9Z-octadecenoyl)-2-(5Z,8Z,11Z,14Z-eicosatetraenoyl)-sn-glycero-3-phospho-1D-myo-inositol + CoA. It carries out the reaction 1-(9Z-octadecenoyl)-sn-glycero-3-phospho-L-serine + (5Z,8Z,11Z,14Z)-eicosatetraenoyl-CoA = 1-(9Z-octadecenoyl)-2-(5Z,8Z,11Z,14Z-eicosatetraenoyl)-sn-glycero-3-phospho-L-serine + CoA. The enzyme catalyses 1-hexadecanoyl-sn-glycero-3-phosphate + (9Z)-octadecenoyl-CoA = 1-hexadecanoyl-2-(9Z-octadecenoyl)-sn-glycero-3-phosphate + CoA. It catalyses the reaction 1-hexadecanoyl-sn-glycero-3-phosphate + (5Z,8Z,11Z,14Z)-eicosatetraenoyl-CoA = 1-hexadecanoyl-2-(5Z,8Z,11Z,14Z-eicosatetraenoyl)-sn-glycero-3-phosphate + CoA. The catalysed reaction is 1-heptadecanoyl-sn-glycero-3-phosphate + (5Z,8Z,11Z,14Z)-eicosatetraenoyl-CoA = 1-heptadecanoyl-2-(5Z,8Z,11Z,14Z)-eicosatetraenoyl-sn-glycero-3-phosphate + CoA. It carries out the reaction 1-octadecanoyl-sn-glycero-3-phosphate + (9Z)-octadecenoyl-CoA = 1-octadecanoyl-2-(9Z-octadecenoyl)-sn-glycero-3-phosphate + CoA. The enzyme catalyses 1-octadecanoyl-sn-glycero-3-phosphate + (5Z,8Z,11Z,14Z)-eicosatetraenoyl-CoA = 1-octadecanoyl-2-(5Z,8Z,11Z,14Z-eicosatetraenoyl)-sn-glycero-3-phosphate + CoA. It catalyses the reaction 1-(9Z-octadecenoyl)-sn-glycero-3-phosphate + hexadecanoyl-CoA = 1-hexadecanoyl-2-(9Z-octadecenoyl)-sn-glycero-3-phosphate + CoA. The catalysed reaction is 1-O-(9Z-octadecenyl)-sn-glycero-3-phosphate + (5Z,8Z,11Z,14Z)-eicosatetraenoyl-CoA = 1-O-(9Z-octadecenyl)-2-(5Z,8Z,11Z,14Z-eicosatetraenoyl)-sn-glycero-3-phosphate + CoA. It carries out the reaction a 1-acyl-sn-glycero-3-phospho-(1D-myo-inositol) + (5Z,8Z,11Z,14Z)-eicosatetraenoyl-CoA = a 1-acyl-2-(5Z,8Z,11Z,14Z-eicosatetraenoyl)-sn-glycero-3-phospho-(1D-myo-inositol) + CoA. The protein operates within phospholipid metabolism; CDP-diacylglycerol biosynthesis; CDP-diacylglycerol from sn-glycerol 3-phosphate: step 2/3. Its function is as follows. Converts 1-acyl-sn-glycerol-3-phosphate (lysophosphatidic acid or LPA) into 1,2-diacyl-sn-glycerol-3-phosphate (phosphatidic acid or PA) by incorporating an acyl moiety at the sn-2 position of the glycerol backbone. Acts on LPA containing saturated or unsaturated fatty acids C16:0-C20:4 at the sn-1 position using C18:1, C20:4 or C18:2-CoA as the acyl donor. Also acts on lysophosphatidylcholine, lysophosphatidylinositol and lysophosphatidylserine using C18:1 or C20:4-CoA. Has a preference for arachidonoyl-CoA as a donor. Also has a modest lysophosphatidylinositol acyltransferase (LPIAT) activity, converts lysophosphatidylinositol (LPI) into phosphatidylinositol. The chain is 1-acyl-sn-glycerol-3-phosphate acyltransferase gamma (AGPAT3) from Pongo abelii (Sumatran orangutan).